The following is a 72-amino-acid chain: MMRFTIGVVCLVAVLLSLAEVSEANYKNAPMNGIMFGKRGPTEYDQRGKTFTALCEIATEACQAWFPSTENK.

Positions 1 to 24 (MMRFTIGVVCLVAVLLSLAEVSEA) are cleaved as a signal peptide. The residue at position 36 (F36) is a Phenylalanine amide. The propeptide occupies 40–72 (GPTEYDQRGKTFTALCEIATEACQAWFPSTENK).

As to expression, expressed in corpora cardiaca (CC), corpora allata (CA), antennal lobe (AL) and gnathal ganglion (GNG) (at protein level). Expression detected in only a few animals (at protein level).

It is found in the secreted. This is Neuropeptide IMFamide from Agrotis ipsilon (Black cutworm moth).